A 483-amino-acid polypeptide reads, in one-letter code: UDP-N-acetylmuramoyl-L-alanyl-D-glutamate--2,6-diaminopimelate ligase (483 aa).

UDP-N-acetyl-alpha-D-muramoyl-L-alanyl-D-glutamate is bound at residue Ser29. 112-118 (GTNGKTT) lines the ATP pocket. Residues 154–155 (TT), Ser181, and Arg189 contribute to the UDP-N-acetyl-alpha-D-muramoyl-L-alanyl-D-glutamate site. Lys221 carries the N6-carboxylysine modification. Meso-2,6-diaminopimelate is bound by residues Arg380, 404 to 407 (DNPR), Gly454, and Glu458. The Meso-diaminopimelate recognition motif motif lies at 404-407 (DNPR).

Belongs to the MurCDEF family. MurE subfamily. It depends on Mg(2+) as a cofactor. Carboxylation is probably crucial for Mg(2+) binding and, consequently, for the gamma-phosphate positioning of ATP.

It is found in the cytoplasm. The enzyme catalyses UDP-N-acetyl-alpha-D-muramoyl-L-alanyl-D-glutamate + meso-2,6-diaminopimelate + ATP = UDP-N-acetyl-alpha-D-muramoyl-L-alanyl-gamma-D-glutamyl-meso-2,6-diaminopimelate + ADP + phosphate + H(+). Its pathway is cell wall biogenesis; peptidoglycan biosynthesis. Its function is as follows. Catalyzes the addition of meso-diaminopimelic acid to the nucleotide precursor UDP-N-acetylmuramoyl-L-alanyl-D-glutamate (UMAG) in the biosynthesis of bacterial cell-wall peptidoglycan. The sequence is that of UDP-N-acetylmuramoyl-L-alanyl-D-glutamate--2,6-diaminopimelate ligase from Clostridium botulinum (strain ATCC 19397 / Type A).